Reading from the N-terminus, the 554-residue chain is Valerianol synthase TPS1B (554 aa).

The Mg(2+) site is built by Asp307 and Asp311. A DDXXD motif motif is present at residues 326 to 330; it reads VQRWD. Asp452, Ser456, and Glu460 together coordinate Mg(2+).

Belongs to the terpene synthase family. Mg(2+) is required as a cofactor.

It catalyses the reaction (2E,6E)-farnesyl diphosphate + H2O = valerianol + diphosphate. Its pathway is secondary metabolite biosynthesis; terpenoid biosynthesis. Functionally, terpene synthase that catalyzes the biosynthesis of the terpene valerianol, which is a volatile compound of floral scent. This is Valerianol synthase TPS1B from Camellia hiemalis (Camellia).